Here is a 105-residue protein sequence, read N- to C-terminus: Cell division protein FtsL (105 aa).

Over 1 to 22 (MIGNERHGLVGVIGADLIRNAK) the chain is Cytoplasmic. A helical transmembrane segment spans residues 23 to 43 (IPLILLVAVLISAVLVVTTAH). Residues 44–105 (RTRLLTAERE…DPSQENIVIK (62 aa)) are Periplasmic-facing.

The protein belongs to the FtsL family. Part of a complex composed of FtsB, FtsL and FtsQ.

The protein localises to the cell inner membrane. Essential cell division protein. May link together the upstream cell division proteins, which are predominantly cytoplasmic, with the downstream cell division proteins, which are predominantly periplasmic. The sequence is that of Cell division protein FtsL from Yersinia pestis.